We begin with the raw amino-acid sequence, 186 residues long: Ribosome-recycling factor (186 aa).

It belongs to the RRF family.

It is found in the cytoplasm. In terms of biological role, responsible for the release of ribosomes from messenger RNA at the termination of protein biosynthesis. May increase the efficiency of translation by recycling ribosomes from one round of translation to another. This is Ribosome-recycling factor from Acidovorax ebreus (strain TPSY) (Diaphorobacter sp. (strain TPSY)).